The primary structure comprises 150 residues: Ribonuclease H (150 aa).

The RNase H type-1 domain maps to 7–148 (ERPRVEIWTD…VDQLATRGRE (142 aa)). Asp-16, Glu-54, Asp-76, and Asp-140 together coordinate Mg(2+).

Belongs to the RNase H family. In terms of assembly, monomer. Mg(2+) is required as a cofactor.

The protein localises to the cytoplasm. The catalysed reaction is Endonucleolytic cleavage to 5'-phosphomonoester.. Its function is as follows. Endonuclease that specifically degrades the RNA of RNA-DNA hybrids. This is Ribonuclease H from Gluconobacter oxydans (strain 621H) (Gluconobacter suboxydans).